Consider the following 102-residue polypeptide: Protamine-2 (102 aa).

3 positions are modified to phosphoserine: Ser-8, Ser-10, and Ser-37. Residues 16–102 (VYGQQLRGQE…RTRRRRCRRH (87 aa)) form a disordered region. Basic residues predominate over residues 49–102 (GHSHYRRRHCSRRRLHRIHRQQHRSCGRRRRRSCRQRRRHRRGCRTRRRRCRRH).

Belongs to the protamine P2 family. In terms of assembly, interacts with TDRP. Post-translationally, proteolytic processing into mature chains is required for histone eviction during spermatogenesis. Transition proteins (TNP1 and TNP2) are required for processing. As to expression, testis.

The protein localises to the nucleus. The protein resides in the chromosome. Its function is as follows. Protamines substitute for histones in the chromatin of sperm during the haploid phase of spermatogenesis. They compact sperm DNA into a highly condensed, stable and inactive complex. The sequence is that of Protamine-2 (PRM2) from Hylobates lar (Lar gibbon).